The chain runs to 830 residues: WD repeat-containing protein 75 (830 aa).

9 WD repeats span residues 4–42 (EGVRVVRCGGSRLNFRRAVFSVDSKYIFCVSGDFVKVYS), 46–85 (EECVHILHGHTDLVSGILVNPSNHLQLYSCSFDGTIKLWD), 89–130 (GILI…QLVS), 144–183 (RQLTFVLDYINRSPKCIAFGNEGEYVAAVRDFYLSVYFFK), 192–230 (LPSTKNKKNAKNKFTCVACHPKEDCIASGHMDGKIRLWR), 236–275 (QKYTYTCLHWHHDMVMDLAFTVTGTSLLSGGRECVLVEWR), 278–317 (SEKNKEFLPRLGSSIEHISVSPAGDLFCTSHSDNKITVIH), 323–361 (SAVIQGLVKDRSISTGLMVDPRTKALVLNGKPGHLQFYS), and 375–422 (QQEY…KLWN). K426 is covalently cross-linked (Glycyl lysine isopeptide (Lys-Gly) (interchain with G-Cter in SUMO2)). WD repeat units lie at residues 429-473 (GFVL…KVWI), 486-524 (AWTCDFVGSYHKYQATNCCFSEDGSLLAVSFEEIVTIWD), 528-568 (WELK…CCWN), and 573-610 (SIQWSAKLNVRVMEPDPYSDHVAAVAQSSAGSDLFVFK). Phosphoserine is present on residues S663 and S671. K675 is covalently cross-linked (Glycyl lysine isopeptide (Lys-Gly) (interchain with G-Cter in SUMO2)). Positions 761 to 807 (KSAEEVPDDVDMEGNKESDDSDEEYDLTEKDKETNNNTDLGEDAIHQ) are disordered. Residues S778 and S781 each carry the phosphoserine modification. Phosphotyrosine is present on Y785. The residue at position 811 (S811) is a Phosphoserine.

As to quaternary structure, component of the proposed t-UTP subcomplex of the ribosomal small subunit (SSU) processome. SSU processome is composed of more than 70 proteins and the RNA chaperone small nucleolar RNA (snoRNA) U3.

It localises to the nucleus. The protein localises to the nucleolus. Functionally, ribosome biogenesis factor. Part of the small subunit (SSU) processome, first precursor of the small eukaryotic ribosomal subunit. During the assembly of the SSU processome in the nucleolus, many ribosome biogenesis factors, an RNA chaperone and ribosomal proteins associate with the nascent pre-rRNA and work in concert to generate RNA folding, modifications, rearrangements and cleavage as well as targeted degradation of pre-ribosomal RNA by the RNA exosome. Involved in nucleolar processing of pre-18S ribosomal RNA. Required for optimal pre-ribosomal RNA transcription by RNA polymerase I. This chain is WD repeat-containing protein 75 (Wdr75), found in Mus musculus (Mouse).